A 272-amino-acid polypeptide reads, in one-letter code: Small ribosomal subunit protein uS2 (272 aa).

The segment at 238 to 272 (ASKEEQTEEAEEETLSSKYREQDFQEAKSGARGEK) is disordered. The segment covering 255 to 272 (KYREQDFQEAKSGARGEK) has biased composition (basic and acidic residues).

Belongs to the universal ribosomal protein uS2 family.

The chain is Small ribosomal subunit protein uS2 from Protochlamydia amoebophila (strain UWE25).